The primary structure comprises 248 residues: 3-deoxy-manno-octulosonate cytidylyltransferase (248 aa).

It belongs to the KdsB family.

The protein resides in the cytoplasm. It carries out the reaction 3-deoxy-alpha-D-manno-oct-2-ulosonate + CTP = CMP-3-deoxy-beta-D-manno-octulosonate + diphosphate. Its pathway is nucleotide-sugar biosynthesis; CMP-3-deoxy-D-manno-octulosonate biosynthesis; CMP-3-deoxy-D-manno-octulosonate from 3-deoxy-D-manno-octulosonate and CTP: step 1/1. The protein operates within bacterial outer membrane biogenesis; lipopolysaccharide biosynthesis. Activates KDO (a required 8-carbon sugar) for incorporation into bacterial lipopolysaccharide in Gram-negative bacteria. This chain is 3-deoxy-manno-octulosonate cytidylyltransferase, found in Chlorobium chlorochromatii (strain CaD3).